The chain runs to 253 residues: Probable transcriptional regulatory protein Hore_12350 (253 aa).

Positions 1 to 21 are disordered; the sequence is MAGHSKWANIKHKKAKEDRKR.

This sequence belongs to the TACO1 family.

The protein resides in the cytoplasm. The sequence is that of Probable transcriptional regulatory protein Hore_12350 from Halothermothrix orenii (strain H 168 / OCM 544 / DSM 9562).